A 435-amino-acid chain; its full sequence is GTPase Der (435 aa).

EngA-type G domains are found at residues glycine 4–glutamate 167 and threonine 175–aspartate 350. GTP-binding positions include glycine 10–serine 17, aspartate 57–isoleucine 61, asparagine 119–aspartate 122, glycine 181–serine 188, aspartate 228–isoleucine 232, and asparagine 293–aspartate 296. A KH-like domain is found at lysine 351–lysine 435.

Belongs to the TRAFAC class TrmE-Era-EngA-EngB-Septin-like GTPase superfamily. EngA (Der) GTPase family. In terms of assembly, associates with the 50S ribosomal subunit.

GTPase that plays an essential role in the late steps of ribosome biogenesis. The chain is GTPase Der from Mesoplasma florum (strain ATCC 33453 / NBRC 100688 / NCTC 11704 / L1) (Acholeplasma florum).